The primary structure comprises 650 residues: Pentatricopeptide repeat-containing protein At2g41080 (650 aa).

12 PPR repeats span residues 43–77 (NTSL…GFSS), 78–112 (DKFI…NYMS), 114–139 (NILI…MPDR), 140–174 (KLTT…GFSP), 175–209 (DEYT…GLEL), 210–240 (DLVV…MPVR), 241–275 (NLVA…GCRP), 276–310 (NKIT…GASS), 311–341 (VVAV…REDE), 342–372 (DEVM…MAEQ), 378–413 (NEVA…GFKP), and 414–444 (GLKH…MPIK). The interval 449 to 524 (IWKTLLSACN…EAGISWFEHK (76 aa)) is type E motif. Positions 525–555 (GEVHQFKMGDRSQSKSKEIYSYLKELTLEMK) are type E(+) motif. A type DYW motif region spans residues 556–650 (LKGYKPDTAS…NGKCSCGDYW (95 aa)).

It belongs to the PPR family. PCMP-H subfamily.

The chain is Pentatricopeptide repeat-containing protein At2g41080 (PCMP-H29) from Arabidopsis thaliana (Mouse-ear cress).